A 252-amino-acid chain; its full sequence is Large ribosomal subunit protein uL29m (252 aa).

The transit peptide at 1 to 39 directs the protein to the mitochondrion; sequence MSTSTVIRPVARSLLQLRKAGNTPPAFLLPCLQSSSTTS. Residues 233-242 are compositionally biased toward acidic residues; it reads EDVLAEAEGE. The tract at residues 233 to 252 is disordered; it reads EDVLAEAEGEAEPKPAQVTA.

It belongs to the universal ribosomal protein uL29 family. As to quaternary structure, component of the mitochondrial large ribosomal subunit. Mature mitochondrial ribosomes consist of a small (37S) and a large (54S) subunit. The 37S subunit contains at least 33 different proteins and 1 molecule of RNA (15S). The 54S subunit contains at least 45 different proteins and 1 molecule of RNA (21S).

The protein resides in the mitochondrion. The protein is Large ribosomal subunit protein uL29m (mrpl4) of Botryotinia fuckeliana (strain B05.10) (Noble rot fungus).